The primary structure comprises 81 residues: Large ribosomal subunit protein bL31B (81 aa).

The protein belongs to the bacterial ribosomal protein bL31 family. Type B subfamily. Part of the 50S ribosomal subunit.

This Bacillus cereus (strain G9842) protein is Large ribosomal subunit protein bL31B.